A 278-amino-acid polypeptide reads, in one-letter code: Bifunctional protein FolD (278 aa).

Residues 165–167 (GRS) and Ser190 each bind NADP(+).

The protein belongs to the tetrahydrofolate dehydrogenase/cyclohydrolase family. As to quaternary structure, homodimer.

The catalysed reaction is (6R)-5,10-methylene-5,6,7,8-tetrahydrofolate + NADP(+) = (6R)-5,10-methenyltetrahydrofolate + NADPH. The enzyme catalyses (6R)-5,10-methenyltetrahydrofolate + H2O = (6R)-10-formyltetrahydrofolate + H(+). The protein operates within one-carbon metabolism; tetrahydrofolate interconversion. Its function is as follows. Catalyzes the oxidation of 5,10-methylenetetrahydrofolate to 5,10-methenyltetrahydrofolate and then the hydrolysis of 5,10-methenyltetrahydrofolate to 10-formyltetrahydrofolate. This chain is Bifunctional protein FolD, found in Clostridium tetani (strain Massachusetts / E88).